The sequence spans 120 residues: Myohemerythrin (120 aa).

Fe cation-binding residues include histidine 26, histidine 56, glutamate 60, histidine 75, histidine 79, histidine 108, and aspartate 113.

This sequence belongs to the hemerythrin family.

Myohemerythrin is an oxygen-binding protein found in the retractor muscles of certain worms. The oxygen-binding site contains two iron atoms. The sequence is that of Myohemerythrin from Riftia pachyptila (Vent tube worm).